A 220-amino-acid polypeptide reads, in one-letter code: Protein-L-isoaspartate O-methyltransferase (220 aa).

Ser-64 is a catalytic residue.

This sequence belongs to the methyltransferase superfamily. L-isoaspartyl/D-aspartyl protein methyltransferase family.

The protein localises to the cytoplasm. The catalysed reaction is [protein]-L-isoaspartate + S-adenosyl-L-methionine = [protein]-L-isoaspartate alpha-methyl ester + S-adenosyl-L-homocysteine. Its function is as follows. Catalyzes the methyl esterification of L-isoaspartyl residues in peptides and proteins that result from spontaneous decomposition of normal L-aspartyl and L-asparaginyl residues. It plays a role in the repair and/or degradation of damaged proteins. The protein is Protein-L-isoaspartate O-methyltransferase of Thermococcus onnurineus (strain NA1).